Here is a 536-residue protein sequence, read N- to C-terminus: Heat shock factor protein 2 (536 aa).

Residues lysine 2 and lysine 82 each participate in a glycyl lysine isopeptide (Lys-Gly) (interchain with G-Cter in SUMO2) cross-link. The DNA-binding element occupies 7 to 112; the sequence is VPAFLSKLWT…LLENIKRKVS (106 aa). Positions 108-122 match the Nuclear localization signal motif; the sequence is KRKVSSSKPEENKIR. The interval 119 to 192 is hydrophobic repeat HR-A/B; it reads NKIRQEDLTK…VTLVQNNQLV (74 aa). Residues lysine 135, lysine 139, lysine 151, lysine 210, lysine 218, and lysine 237 each participate in a glycyl lysine isopeptide (Lys-Gly) (interchain with G-Cter in SUMO2) cross-link. Residues 195-210 carry the Nuclear localization signal motif; it reads KRKRPLLLNTNGAQKK. A disordered region spans residues 300 to 337; the sequence is QSGEQNEPARESLSSGSDGSSPLMSSAVQLNGSSSLTS. Low complexity predominate over residues 311 to 325; sequence SLSSGSDGSSPLMSS. Residues 326–337 show a composition bias toward polar residues; the sequence is AVQLNGSSSLTS. The interval 360-385 is hydrophobic repeat HR-C; it reads LLDYLDSIDCSLEDFQAMLSGRQFSI. The tract at residues 407–438 is disordered; it reads NNTKSENKGLETTKNNVVQPVSEEGRKSKSKP. Positions 429 to 438 are enriched in basic and acidic residues; that stretch reads EEGRKSKSKP.

This sequence belongs to the HSF family. As to quaternary structure, DNA-binding homotrimer in stressed or heat shocked cells, otherwise found as a homodimer.

The protein localises to the cytoplasm. It is found in the nucleus. DNA-binding protein that specifically binds heat shock promoter elements (HSE) and activates transcription. In higher eukaryotes, HSF is unable to bind to the HSE unless the cells are heat shocked. The chain is Heat shock factor protein 2 (HSF2) from Homo sapiens (Human).